Here is a 312-residue protein sequence, read N- to C-terminus: DNA-directed RNA polymerase subunit alpha (312 aa).

Positions 1-229 are alpha N-terminal domain (alpha-NTD); sequence MLQYQIDRIE…ELFQPLATVT (229 aa). The interval 236 to 312 is alpha C-terminal domain (alpha-CTD); it reads IEPEPSAEAQ…ISIPQSRTSV (77 aa).

Belongs to the RNA polymerase alpha chain family. In cyanobacteria the RNAP catalytic core is composed of 2 alpha, 1 beta, 1 beta', 1 gamma and 1 omega subunit. When a sigma factor is associated with the core the holoenzyme is formed, which can initiate transcription.

The catalysed reaction is RNA(n) + a ribonucleoside 5'-triphosphate = RNA(n+1) + diphosphate. DNA-dependent RNA polymerase catalyzes the transcription of DNA into RNA using the four ribonucleoside triphosphates as substrates. This Synechococcus sp. (strain CC9311) protein is DNA-directed RNA polymerase subunit alpha.